The chain runs to 224 residues: Ras-related protein RABA4b (224 aa).

An N-acetylalanine modification is found at A2. Residue 24–31 participates in GTP binding; it reads GDSAVGKS. An Effector region motif is present at residues 46–54; the sequence is SKATIGVEF. Residues 72–76, 130–133, and 160–161 each bind GTP; these read DTAGQ, NKSD, and SA. Residues C220 and C221 are each lipidated (S-geranylgeranyl cysteine).

It belongs to the small GTPase superfamily. Rab family. In terms of assembly, interacts with TCTP1. In terms of tissue distribution, expressed in roots, stems, leaves and flowers. Expressed in tips of growing root hair cells.

Its subcellular location is the early endosome membrane. It localises to the golgi apparatus. It is found in the trans-Golgi network membrane. Regulator of membrane trafficking. May be required for secretion of cell wall components in cells. The chain is Ras-related protein RABA4b from Arabidopsis thaliana (Mouse-ear cress).